A 247-amino-acid polypeptide reads, in one-letter code: 2,3-bisphosphoglycerate-dependent phosphoglycerate mutase (247 aa).

Residues Arg-8–Asn-15, Thr-21–Gly-22, Arg-60, Glu-87–Tyr-90, Lys-98, Arg-114–Arg-115, and Gly-183–Asn-184 contribute to the substrate site. Residue His-9 is the Tele-phosphohistidine intermediate of the active site. The active-site Proton donor/acceptor is the Glu-87.

The protein belongs to the phosphoglycerate mutase family. BPG-dependent PGAM subfamily. Homodimer.

The enzyme catalyses (2R)-2-phosphoglycerate = (2R)-3-phosphoglycerate. It participates in carbohydrate degradation; glycolysis; pyruvate from D-glyceraldehyde 3-phosphate: step 3/5. Functionally, catalyzes the interconversion of 2-phosphoglycerate and 3-phosphoglycerate. The chain is 2,3-bisphosphoglycerate-dependent phosphoglycerate mutase from Albidiferax ferrireducens (strain ATCC BAA-621 / DSM 15236 / T118) (Rhodoferax ferrireducens).